The chain runs to 284 residues: Homeobox protein six1 (284 aa).

The segment at residues 124–183 (GEETSYCFKEKSRGVLREWYAHNPYPSPREKRELAEATGLTTTQVSNWFKNRRQRDRAAE) is a DNA-binding region (homeobox). Residues 168 to 230 (VSNWFKNRRQ…SPPQSPDQNS (63 aa)) are disordered. Residues 179 to 190 (DRAAEAKERENT) show a composition bias toward basic and acidic residues. A compositionally biased stretch (low complexity) spans 191–202 (ENNNTSTNKQNQ).

Belongs to the SIX/Sine oculis homeobox family.

Its subcellular location is the nucleus. The protein localises to the cytoplasm. Transcription factor that is involved in the regulation of cell proliferation, apoptosis and embryonic development. Depending on context, functions as a transcriptional repressor or activator. Required for the normal formation of pre-placodal ectoderm. This chain is Homeobox protein six1 (six1), found in Xenopus laevis (African clawed frog).